Consider the following 153-residue polypeptide: Adenosine 5'-monophosphoramidase HINT3 (153 aa).

The region spanning 20-130 (IFCRIANKQE…PASQLGFLSR (111 aa)) is the HIT domain. AMP-binding positions include 46-47 (DI) and 115-117 (HLH). Residues 113 to 117 (HLHLH) carry the Histidine triad motif motif. The active-site Tele-AMP-histidine intermediate is His115.

This sequence belongs to the HINT family. In terms of assembly, forms dimers to octamers and even larger oligomer.

The protein localises to the cytoplasm. Its subcellular location is the nucleus. The catalysed reaction is adenosine 5'-phosphoramidate + H2O = AMP + NH4(+). Functionally, exhibits adenosine 5'-monophosphoramidase activity, hydrolyzing purine nucleotide phosphoramidates with a single phosphate group such as adenosine 5'monophosphoramidate (AMP-NH2) to yield AMP and NH2. Hydrolyzes lysyl-AMP (AMP-N-epsilon-(N-alpha-acetyl lysine methyl ester)) generated by lysine tRNA ligase. This is Adenosine 5'-monophosphoramidase HINT3 (hint3) from Xenopus tropicalis (Western clawed frog).